Here is a 557-residue protein sequence, read N- to C-terminus: Formate--tetrahydrofolate ligase 2 (557 aa).

Residue 66–73 (TPAGEGKT) coordinates ATP.

Belongs to the formate--tetrahydrofolate ligase family.

The enzyme catalyses (6S)-5,6,7,8-tetrahydrofolate + formate + ATP = (6R)-10-formyltetrahydrofolate + ADP + phosphate. The protein operates within one-carbon metabolism; tetrahydrofolate interconversion. The sequence is that of Formate--tetrahydrofolate ligase 2 from Streptococcus pyogenes serotype M18 (strain MGAS8232).